Here is a 499-residue protein sequence, read N- to C-terminus: Flotillin-like protein 2 (499 aa).

Cys-37 is lipidated: S-palmitoyl cysteine. Positions 243 to 319 form a coiled coil; the sequence is LREEAKVKAE…LRLTEKLKAE (77 aa).

It belongs to the band 7/mec-2 family. Flotillin subfamily. Post-translationally, may be palmitoylated.

Its subcellular location is the cell membrane. The protein localises to the membrane. It localises to the caveola. May act as a scaffolding protein within caveolar membranes, functionally participating in formation of caveolae or caveolae-like vesicles. The polypeptide is Flotillin-like protein 2 (FLOT2) (Oryza sativa subsp. japonica (Rice)).